Reading from the N-terminus, the 161-residue chain is Putative acetyltransferase SAR0816 (161 aa).

This sequence belongs to the transferase hexapeptide repeat family.

The protein is Putative acetyltransferase SAR0816 of Staphylococcus aureus (strain MRSA252).